The chain runs to 109 residues: NADH-quinone oxidoreductase subunit K (109 aa).

Helical transmembrane passes span 12–32 (LNHY…GLFM), 40–60 (ILMS…AFSV), and 72–92 (IIIL…LLIY).

It belongs to the complex I subunit 4L family. As to quaternary structure, NDH-1 is composed of 14 different subunits. Subunits NuoA, H, J, K, L, M, N constitute the membrane sector of the complex.

The protein resides in the cell inner membrane. The catalysed reaction is a quinone + NADH + 5 H(+)(in) = a quinol + NAD(+) + 4 H(+)(out). Functionally, NDH-1 shuttles electrons from NADH, via FMN and iron-sulfur (Fe-S) centers, to quinones in the respiratory chain. The immediate electron acceptor for the enzyme in this species is believed to be ubiquinone. Couples the redox reaction to proton translocation (for every two electrons transferred, four hydrogen ions are translocated across the cytoplasmic membrane), and thus conserves the redox energy in a proton gradient. The chain is NADH-quinone oxidoreductase subunit K from Rickettsia bellii (strain RML369-C).